Here is a 138-residue protein sequence, read N- to C-terminus: Mediator of RNA polymerase II transcription subunit 19 (138 aa).

It belongs to the Mediator complex subunit 19 family. In terms of assembly, component of the Mediator complex.

Its subcellular location is the nucleus. Component of the Mediator complex, a coactivator involved in the regulated transcription of nearly all RNA polymerase II-dependent genes. Mediator functions as a bridge to convey information from gene-specific regulatory proteins to the basal RNA polymerase II transcription machinery. Mediator is recruited to promoters by direct interactions with regulatory proteins and serves as a scaffold for the assembly of a functional preinitiation complex with RNA polymerase II and the general transcription factors. This is Mediator of RNA polymerase II transcription subunit 19 (med19) from Schizosaccharomyces pombe (strain 972 / ATCC 24843) (Fission yeast).